The following is a 108-amino-acid chain: uncharacterized protein (108 aa).

Residues 20 to 74 (VRQRRTALILDQETLARRIGVSFQQIQKYERGRNRISASRLYDIAKALAVPIDYF) enclose the HTH cro/C1-type domain. A DNA-binding region (H-T-H motif) is located at residues 31 to 50 (QETLARRIGVSFQQIQKYER).

This is an uncharacterized protein from Rhodospirillum rubrum.